The sequence spans 495 residues: Cytochrome P450 monooxygenase FrzC (495 aa).

A helical transmembrane segment spans residues 8–28 (GLVVGLWVTYHILLGTYNVFF). Cys-437 is a heme binding site.

Belongs to the cytochrome P450 family. It depends on heme as a cofactor.

The protein resides in the membrane. The enzyme catalyses (S,S)-2,5-di-(p-hydroxybenzyl)piperazine + reduced [NADPH--hemoprotein reductase] + O2 = (1S,4S)-4-[(4-hydroxyphenyl)methyl]-2,5-diazaspiro[bicyclo[3.2.1]octane-6,1'-cyclohexane]-2',5'-dien-4'-one + oxidized [NADPH--hemoprotein reductase] + 2 H2O + H(+). The protein operates within secondary metabolite biosynthesis. Cytochrome P450 monooxygenase; part of the gene cluster that mediates the biosynthesis of the alkaloid (-)-FR901483, a potent immunosuppressant that shows efficacy in animal models and a probable inhibitor of purine nucleotide biosynthesis by targeting phosphoribosylpyrophosphate amidotransferase (PPAT). Within the pathway, FrzC catalyzes the coupling between N10 and C1' to produce a 1,4-diazabicyclo[3.2.1]octane spiro-fused to a 2,5-cyclohexadienone. FrzC probably first catalyzes homolysis of the N-H bond to generate the N10 radical which is followed by an O-H abstraction to give the phenolic radical which can be delocalized to C1'. Radical coupling between N10 and C1' then forms. The biosynthesis of (-)-FR901483 starts with the condensation of two L-tyrosines to yield (S,S)-dityrosyl-piperazine. This process occurs in 3 steps with the non-canonical nonribosomal peptide synthetase FrzA catalyzing the reduction of L-tyrosine into L-tyrosinal, the spontaneous condensation of 2 L-tyrosinal units, and the subsequent reduction by the NmrA-like family domain-containing oxidoreductase FrzB. The cytochrome P450 monooxygenase FrzC then performs coupling between N10 and C1' to morph the piperazine into a 1,4-diazabicyclo[3.2.1]octane spiro-fused to a 2,5-cyclohexadienone. The dienone portion is further reduced to cyclohexanone by the flavin-dependent reductase FrzD. The methyltranserases (MTs) FrzE and FrzF are then involved in the methylation at the C10' amine and the C4 phenolic oxygen, respectively. The order of the two MTs appear to be interchangeable. Cleavage of the C9-N10' bond by the dioxygenase FrzG then leads to formation of a conjugated iminium. In addition to the oxidation of C9, an additional dehydrogenation between C7 and C8 can occur to give a likely shunt product. The next biosynthetic step is the intramolecular aldol condensation catalyzed by the newly identified aldolase FrzH to yield an aza-tricyclic product with the formation of a C9-C3' bond. The short-chain dehydrogenase/reductase FrzI then produces dephospho-(-)-FR901483 that is phosphorylated at C4'-OH into (-)-FR901483 by the phosphotransferase FrzJ. This is Cytochrome P450 monooxygenase FrzC from Cladobotryum sp.